The chain runs to 557 residues: Organic cation/carnitine transporter 2 (557 aa).

The Cytoplasmic portion of the chain corresponds to 1-20 (MRDYDEVTAFLGEWGPFQRL). The helical transmembrane segment at 21 to 41 (IFFLLSASIIPNGFNGMSIVF) threads the bilayer. The Extracellular portion of the chain corresponds to 42–142 (LAGTPEHRCL…DLVCKDDWKA (101 aa)). N-linked (GlcNAc...) asparagine glycosylation is found at N57, N64, and N91. Residues 143–163 (PLTTSLFFVGVLMGSFISGQL) form a helical membrane-spanning segment. At 164-172 (SDRFGRKNV) the chain is on the cytoplasmic side. The chain crosses the membrane as a helical span at residues 173–193 (LFLTMGMQTGFSFLQVFSVNF). The Extracellular segment spans residues 194–197 (EMFT). The helical transmembrane segment at 198 to 218 (VLFVLVGMGQISNYVAAFVLG) threads the bilayer. Residue 218–225 (GTEILSKS) coordinates ATP. Topologically, residues 219 to 232 (TEILSKSIRIIFAT) are cytoplasmic. A helical membrane pass occupies residues 233-253 (LGVCIFYAFGFMVLPLFAYFI). At 254-257 (RDWR) the chain is on the extracellular side. A helical membrane pass occupies residues 258 to 278 (MLLLALTVPGVLCGALWWFIP). Over 279 to 341 (ESPRWLISQG…YDLIRTRNIR (63 aa)) the chain is Cytoplasmic. The chain crosses the membrane as a helical span at residues 342-362 (VITIMSIILWLTISVGYFGLS). Residues 363 to 373 (LDTPNLHGDIY) are Extracellular-facing. Residues 374-394 (VNCFLLAAVEVPAYVLAWLLL) traverse the membrane as a helical segment. Over 395 to 406 (QYLPRRYSISAA) the chain is Cytoplasmic. A helical membrane pass occupies residues 407–427 (LFLGGSVLLFMQLVPSELFYL). At 428–430 (STA) the chain is on the extracellular side. A helical transmembrane segment spans residues 431-451 (LVMVGKFGITSAYSMVYVYTA). Residues 452 to 462 (ELYPTVVRNMG) lie on the Cytoplasmic side of the membrane. A helical transmembrane segment spans residues 463-483 (VGVSSTASRLGSILSPYFVYL). The Extracellular portion of the chain corresponds to 484 to 488 (GAYDR). Y486 is subject to Phosphotyrosine. A helical membrane pass occupies residues 489–509 (FLPYILMGSLTILTAILTLFF). At 510 to 557 (PESFGVPLPDTIDQMLRVKGIKQWQIQSQTRMQKDGEESPTVLKSTAF) the chain is on the cytoplasmic side. Position 548 is a phosphoserine (S548). T550 bears the Phosphothreonine mark.

Belongs to the major facilitator (TC 2.A.1) superfamily. Organic cation transporter (TC 2.A.1.19) family. As to quaternary structure, interacts with PDZK1. Widely expressed. Expressed in kidney, liver and testis. Expressed at the brush border of the small, large intestine and colon (at protein level).

It is found in the apical cell membrane. It localises to the basal cell membrane. The protein resides in the cell membrane. The enzyme catalyses (R)-carnitine(out) + Na(+)(out) = (R)-carnitine(in) + Na(+)(in). The catalysed reaction is glycine betaine(out) + Na(+)(out) = glycine betaine(in) + Na(+)(in). It catalyses the reaction glycine betaine(out) + (R)-carnitine(in) = glycine betaine(in) + (R)-carnitine(out). It carries out the reaction O-butanoyl-(R)-carnitine(out) + Na(+)(out) = O-butanoyl-(R)-carnitine(in) + Na(+)(in). The enzyme catalyses O-acetyl-(R)-carnitine(out) + Na(+)(out) = O-acetyl-(R)-carnitine(in) + Na(+)(in). The catalysed reaction is O-propanoyl-(R)-carnitine(out) + Na(+)(out) = O-propanoyl-(R)-carnitine(in) + Na(+)(in). It catalyses the reaction (S)-carnitine(out) + Na(+)(out) = (S)-carnitine(in) + Na(+)(in). It carries out the reaction an O-acyl-(R)-carnitine(out) + Na(+)(out) = an O-acyl-(R)-carnitine(in) + Na(+)(in). The enzyme catalyses L-glutamyl-L-arginyl-glycyl-L-methionyl-L-threonine(out) + Na(+)(out) = L-glutamyl-L-arginyl-glycyl-L-methionyl-L-threonine(in) + Na(+)(in). The catalysed reaction is N,N-dimethylglycine(out) + Na(+)(out) = N,N-dimethylglycine(in) + Na(+)(in). Its activity is regulated as follows. Inhibited by emetine, quinidine and verapamil. The IC(50) of emetine is 4.2 uM. Not inhibited by valproic acid. Transport of (R)-carnitine is stimulated by cholesterol in the plasma membrane. Sodium-ion dependent, high affinity carnitine transporter. Involved in the active cellular uptake of carnitine. Transports one sodium ion with one molecule of carnitine. Also transports organic cations such as tetraethylammonium (TEA) without the involvement of sodium. Also relative uptake activity ratio of carnitine to TEA is 11.3. May also contribute to regulate the transport of organic compounds in testis across the blood-testis-barrier. This chain is Organic cation/carnitine transporter 2, found in Mus musculus (Mouse).